A 410-amino-acid chain; its full sequence is LL-diaminopimelate aminotransferase (410 aa).

2 residues coordinate substrate: tyrosine 15 and glycine 42. Residues tyrosine 72, 108–109 (SK), tyrosine 132, asparagine 187, tyrosine 218, and 246–248 (SFS) each bind pyridoxal 5'-phosphate. Substrate contacts are provided by lysine 109, tyrosine 132, and asparagine 187. N6-(pyridoxal phosphate)lysine is present on lysine 249. 2 residues coordinate pyridoxal 5'-phosphate: arginine 257 and asparagine 292. Substrate-binding residues include asparagine 292 and arginine 388.

Belongs to the class-I pyridoxal-phosphate-dependent aminotransferase family. LL-diaminopimelate aminotransferase subfamily. Homodimer. Requires pyridoxal 5'-phosphate as cofactor.

The catalysed reaction is (2S,6S)-2,6-diaminopimelate + 2-oxoglutarate = (S)-2,3,4,5-tetrahydrodipicolinate + L-glutamate + H2O + H(+). It participates in amino-acid biosynthesis; L-lysine biosynthesis via DAP pathway; LL-2,6-diaminopimelate from (S)-tetrahydrodipicolinate (aminotransferase route): step 1/1. In terms of biological role, involved in the synthesis of meso-diaminopimelate (m-DAP or DL-DAP), required for both lysine and peptidoglycan biosynthesis. Catalyzes the direct conversion of tetrahydrodipicolinate to LL-diaminopimelate. This Geotalea daltonii (strain DSM 22248 / JCM 15807 / FRC-32) (Geobacter daltonii) protein is LL-diaminopimelate aminotransferase.